The chain runs to 213 residues: Kynurenine formamidase (213 aa).

Trp18 provides a ligand contact to substrate. 3 residues coordinate Zn(2+): His48, His52, and Asp54. Catalysis depends on His58, which acts as the Proton donor/acceptor. His160 and Glu172 together coordinate Zn(2+).

This sequence belongs to the Cyclase 1 superfamily. KynB family. In terms of assembly, homodimer. The cofactor is Zn(2+).

The enzyme catalyses N-formyl-L-kynurenine + H2O = L-kynurenine + formate + H(+). The protein operates within amino-acid degradation; L-tryptophan degradation via kynurenine pathway; L-kynurenine from L-tryptophan: step 2/2. In terms of biological role, catalyzes the hydrolysis of N-formyl-L-kynurenine to L-kynurenine, the second step in the kynurenine pathway of tryptophan degradation. The sequence is that of Kynurenine formamidase from Burkholderia thailandensis (strain ATCC 700388 / DSM 13276 / CCUG 48851 / CIP 106301 / E264).